The primary structure comprises 418 residues: Glutamyl-tRNA reductase (418 aa).

Residues 49–52, serine 106, 111–113, and glutamine 117 contribute to the substrate site; these read TCNR and EPQ. The active-site Nucleophile is the cysteine 50. 186 to 191 provides a ligand contact to NADP(+); the sequence is GAGEMI.

Belongs to the glutamyl-tRNA reductase family. As to quaternary structure, homodimer.

The enzyme catalyses (S)-4-amino-5-oxopentanoate + tRNA(Glu) + NADP(+) = L-glutamyl-tRNA(Glu) + NADPH + H(+). Its pathway is porphyrin-containing compound metabolism; protoporphyrin-IX biosynthesis; 5-aminolevulinate from L-glutamyl-tRNA(Glu): step 1/2. In terms of biological role, catalyzes the NADPH-dependent reduction of glutamyl-tRNA(Glu) to glutamate 1-semialdehyde (GSA). The protein is Glutamyl-tRNA reductase of Alcanivorax borkumensis (strain ATCC 700651 / DSM 11573 / NCIMB 13689 / SK2).